The chain runs to 406 residues: Kelch domain-containing protein 1 (406 aa).

Kelch repeat units lie at residues 24–76 (FLYV…CGAC), 80–134 (RLYV…VYKD), 135–181 (RLIY…TKTR), 208–258 (KGYV…AITD), 260–307 (KLFL…ACLG), and 311–361 (EIMV…LKSQ).

In terms of assembly, component of a CRL5 E3 ubiquitin-protein ligase complex, also named ECS (Elongin BC-CUL2/5-SOCS-box protein) complex, composed of CUL5, Elongin BC (ELOB and ELOC), RBX1 and substrate-specific adapter KLHDC1.

Its subcellular location is the cytoplasm. It is found in the cytosol. The protein operates within protein modification; protein ubiquitination. Its function is as follows. Substrate-recognition component of a Cul5-RING (CRL5) E3 ubiquitin-protein ligase complex of the DesCEND (destruction via C-end degrons) pathway, which recognizes a C-degron located at the extreme C terminus of target proteins, leading to their ubiquitination and degradation. The C-degron recognized by the DesCEND pathway is usually a motif of less than ten residues and can be present in full-length proteins, truncated proteins or proteolytically cleaved forms. The CRL5(KLHDC1) complex mediates ubiquitination and degradation of truncated SELENOS selenoprotein produced by failed UGA/Sec decoding, which ends with a glycine. The protein is Kelch domain-containing protein 1 of Mus musculus (Mouse).